Here is a 319-residue protein sequence, read N- to C-terminus: uncharacterized protein (319 aa).

The chain crosses the membrane as a helical span at residues 270 to 290 (AAALWWIPAWLAMIVEVAVLG).

It is found in the membrane. This is an uncharacterized protein from Mycobacterium tuberculosis (strain CDC 1551 / Oshkosh).